A 95-amino-acid chain; its full sequence is Large ribosomal subunit protein uL23 (95 aa).

The protein belongs to the universal ribosomal protein uL23 family. As to quaternary structure, part of the 50S ribosomal subunit. Contacts protein L29, and trigger factor when it is bound to the ribosome.

In terms of biological role, one of the early assembly proteins it binds 23S rRNA. One of the proteins that surrounds the polypeptide exit tunnel on the outside of the ribosome. Forms the main docking site for trigger factor binding to the ribosome. This chain is Large ribosomal subunit protein uL23, found in Thermodesulfovibrio yellowstonii (strain ATCC 51303 / DSM 11347 / YP87).